The sequence spans 481 residues: Glutamyl-tRNA(Gln) amidotransferase subunit A (481 aa).

Active-site charge relay system residues include lysine 76 and serine 151. Serine 175 (acyl-ester intermediate) is an active-site residue.

It belongs to the amidase family. GatA subfamily. Heterotrimer of A, B and C subunits.

The enzyme catalyses L-glutamyl-tRNA(Gln) + L-glutamine + ATP + H2O = L-glutaminyl-tRNA(Gln) + L-glutamate + ADP + phosphate + H(+). In terms of biological role, allows the formation of correctly charged Gln-tRNA(Gln) through the transamidation of misacylated Glu-tRNA(Gln) in organisms which lack glutaminyl-tRNA synthetase. The reaction takes place in the presence of glutamine and ATP through an activated gamma-phospho-Glu-tRNA(Gln). This is Glutamyl-tRNA(Gln) amidotransferase subunit A from Neisseria gonorrhoeae (strain ATCC 700825 / FA 1090).